A 103-amino-acid chain; its full sequence is Small ribosomal subunit protein uS10 (103 aa).

Belongs to the universal ribosomal protein uS10 family. Part of the 30S ribosomal subunit.

Its function is as follows. Involved in the binding of tRNA to the ribosomes. In Acinetobacter baumannii (strain AB307-0294), this protein is Small ribosomal subunit protein uS10.